We begin with the raw amino-acid sequence, 457 residues long: Argininosuccinate lyase (457 aa).

The protein belongs to the lyase 1 family. Argininosuccinate lyase subfamily.

The protein localises to the cytoplasm. The enzyme catalyses 2-(N(omega)-L-arginino)succinate = fumarate + L-arginine. Its pathway is amino-acid biosynthesis; L-arginine biosynthesis; L-arginine from L-ornithine and carbamoyl phosphate: step 3/3. In Shigella boydii serotype 18 (strain CDC 3083-94 / BS512), this protein is Argininosuccinate lyase.